The chain runs to 793 residues: MFNQSKQKPTMKLMWQAWLIYTALAAHLPEEQALRQACLSCDATQSCNCSFMGLDFIPPGLTGKITVLNLAHNRIKLIRTHDLQKAVNLRTLLLQSNQISSIDEDSFGSQGKLELLDLSNNSLAHLSPVWFGPLFSLQHLRIQGNSYSDLGESSPFSSLRNLSSLHLGNPQFSIIRQGNFEGIVFLNTLRIDGDNLSQYEPGSLKSIRKINHMIISIRRIDVFSAVIRDLLHSAIWLEVREIKLDIENEKLVQNSTLPLTIQKLTFTGASFTDKYISQIAVLLKEIRSLRELEAIDCVLEGKGAWDMTEIARSKQSSIETLSITNMTILDFYLFFDLEGIETQVGKLKRLSIASSKVFMVPCRLARYFSSLLYLDFHDNLLVNNRLGETICEDAWPSLQTLNLSKNSLKSLKQAARYISNLHKLINLDISENNFGEIPDMCEWPENLKYLNLSSTQIPKLTTCIPSTLEVLDVSANNLQDFGLQLPFLKELYLTKNHLKTLPEATDIPNLVAMSISRNKLNSFSKEEFESFKQMELLDASANNFICSCEFLSFIHHEAGIAQVLVGWPESYICDSPLTVRGAQVGSVQLSLMECHRSLLVSLICTLVFLFILILVVVGYKYHAVWYMRMTWAWLQAKRKPKRAPTKDICYDAFVSYSENDSNWVENIMVQQLEQACPPFRLCLHKRDFVPGKWIVDNIIDSIEKSHKTLFVLSEHFVQSEWCKYELDFSHFRLFDENNDVAILILLEPIQSQAIPKRFCKLRKIMNTKTYLEWPPDEEQQQMFWENLKAALKS.

A signal peptide spans 1–25 (MFNQSKQKPTMKLMWQAWLIYTALA). The Extracellular segment spans residues 26–597 (AHLPEEQALR…QLSLMECHRS (572 aa)). Cysteines 41 and 47 form a disulfide. Residue N48 is glycosylated (N-linked (GlcNAc...) asparagine). LRR repeat units follow at residues 64-85 (KITVLNLAHNRIKLIRTHDLQK), 88-109 (NLRTLLLQSNQISSIDEDSFGS), 112-133 (KLELLDLSNNSLAHLSPVWFGP), 136-157 (SLQHLRIQGNSYSDLGESSPFS), 161-182 (NLSSLHLGNPQFSIIRQGNFEG), and 185-206 (FLNTLRIDGDNLSQYEPGSLKS). A glycan (N-linked (GlcNAc...) asparagine) is linked at N120. N-linked (GlcNAc...) asparagine glycans are attached at residues N161, N195, N254, and N325. Cysteines 362 and 391 form a disulfide. LRR repeat units follow at residues 370-391 (SLLYLDFHDNLLVNNRLGETIC), 397-418 (SLQTLNLSKNSLKSLKQAARYI), 423-444 (KLINLDISENNFGEIPDMCEWP), 446-467 (NLKYLNLSSTQIPKLTTCIPST), 468-486 (LEVLDVSANNLQDFGLQLP), 487-508 (FLKELYLTKNHLKTLPEATDIP), and 509-530 (NLVAMSISRNKLNSFSKEEFES). The N-linked (GlcNAc...) asparagine glycan is linked to N402. C441 and C463 are disulfide-bonded. N451 carries an N-linked (GlcNAc...) asparagine glycan. The LRRCT domain occupies 542–596 (NNFICSCEFLSFIHHEAGIAQVLVGWPESYICDSPLTVRGAQVGSVQLSLMECHR). Residues 598–618 (LLVSLICTLVFLFILILVVVG) form a helical membrane-spanning segment. The Cytoplasmic portion of the chain corresponds to 619-793 (YKYHAVWYMR…WENLKAALKS (175 aa)). One can recognise a TIR domain in the interval 648 to 791 (ICYDAFVSYS…MFWENLKAAL (144 aa)).

The protein belongs to the Toll-like receptor family. In terms of assembly, binds MYD88 (via TIR domain). N-glycosylated. TLR2-1 is more heavily glycosylated than TLR2-2. Highly expressed in ovary. Detected at lower levels in heart, lung, gizzard and testis.

It is found in the membrane. Its function is as follows. Participates in the innate immune response to microbial agents. Acts via MYD88 and TRAF6, leading to NF-kappa-B activation, cytokine secretion and the inflammatory response. Does not respond to LPS and responds with less ability than TLR2-2 to mycoplasmal macrophage-activating lipopeptide-2kD (MALP-2). The protein is Toll-like receptor 2 type-1 (TLR2-1) of Gallus gallus (Chicken).